The chain runs to 1203 residues: DNA-directed RNA polymerase subunit beta' (1203 aa).

Zn(2+) is bound by residues Cys-60, Cys-62, Cys-75, and Cys-78. Residues Asp-449, Asp-451, and Asp-453 each contribute to the Mg(2+) site. The Zn(2+) site is built by Cys-818, Cys-892, Cys-899, and Cys-902.

It belongs to the RNA polymerase beta' chain family. In terms of assembly, the RNAP catalytic core consists of 2 alpha, 1 beta, 1 beta' and 1 omega subunit. When a sigma factor is associated with the core the holoenzyme is formed, which can initiate transcription. Requires Mg(2+) as cofactor. The cofactor is Zn(2+).

It carries out the reaction RNA(n) + a ribonucleoside 5'-triphosphate = RNA(n+1) + diphosphate. Its function is as follows. DNA-dependent RNA polymerase catalyzes the transcription of DNA into RNA using the four ribonucleoside triphosphates as substrates. This chain is DNA-directed RNA polymerase subunit beta', found in Bacillus anthracis.